The sequence spans 333 residues: MAFADRLLAAWYAGHPALALLRPLEALYRRVVTRKRARFLSGESASYRAPVPVIVVGNITVGGTGKTPMILWLIEHCRQLGLKVGVVSRGYGAKPPQLPWRVQANQCADQAGDEPLLIVQRTGVPLMIDPDRSRAVQALLASEPLDLILCDDGMQHYRLARDLELVLIDAARGLGNGRCLPAGPLREPAERLLDADAVLFNGANADRADGFGFCLQPSALVNLRSGERRALDHFPAGQRLHAVAGIGNPQRFFNTLLGLNWQPVPHPFADHAQFSAQSLAFSPQLPLVMTEKDAVKCRAFAADDWWYLAVEAQPTPAFSAWFDNQLQRLLRKP.

Thr-60–Thr-67 is a binding site for ATP.

It belongs to the LpxK family.

The enzyme catalyses a lipid A disaccharide + ATP = a lipid IVA + ADP + H(+). It functions in the pathway glycolipid biosynthesis; lipid IV(A) biosynthesis; lipid IV(A) from (3R)-3-hydroxytetradecanoyl-[acyl-carrier-protein] and UDP-N-acetyl-alpha-D-glucosamine: step 6/6. In terms of biological role, transfers the gamma-phosphate of ATP to the 4'-position of a tetraacyldisaccharide 1-phosphate intermediate (termed DS-1-P) to form tetraacyldisaccharide 1,4'-bis-phosphate (lipid IVA). In Pseudomonas putida (strain GB-1), this protein is Tetraacyldisaccharide 4'-kinase.